A 102-amino-acid chain; its full sequence is Protamine-2 (102 aa).

Disordered stretches follow at residues 1-40 and 67-102; these read MVRYRVRSPSEPSHEVYRQQLHGQEQGHHGQEEQGLSPEH and HRQQHRSCRRRKRRSCRHRRKHRRGCRTRRRTCRRH. Phosphoserine is present on residues Ser-8, Ser-10, and Ser-37.

This sequence belongs to the protamine P2 family. As to quaternary structure, interacts with TDRP. In terms of processing, proteolytic processing into mature chains is required for histone eviction during spermatogenesis. Transition proteins (TNP1 and TNP2) are required for processing. In terms of tissue distribution, testis.

It localises to the nucleus. Its subcellular location is the chromosome. Functionally, protamines substitute for histones in the chromatin of sperm during the haploid phase of spermatogenesis. They compact sperm DNA into a highly condensed, stable and inactive complex. This Pan troglodytes (Chimpanzee) protein is Protamine-2 (PRM2).